Here is a 104-residue protein sequence, read N- to C-terminus: NADH-quinone oxidoreductase subunit K (104 aa).

Helical transmembrane passes span 4–24 (VPAS…LFGA), 31–51 (VIVL…LVAF), and 67–87 (LFTM…LIAL).

This sequence belongs to the complex I subunit 4L family. NDH-1 is composed of 14 different subunits. Subunits NuoA, H, J, K, L, M, N constitute the membrane sector of the complex.

It is found in the cell membrane. The enzyme catalyses a quinone + NADH + 5 H(+)(in) = a quinol + NAD(+) + 4 H(+)(out). Its function is as follows. NDH-1 shuttles electrons from NADH, via FMN and iron-sulfur (Fe-S) centers, to quinones in the respiratory chain. The immediate electron acceptor for the enzyme in this species is believed to be a menaquinone. Couples the redox reaction to proton translocation (for every two electrons transferred, four hydrogen ions are translocated across the cytoplasmic membrane), and thus conserves the redox energy in a proton gradient. This is NADH-quinone oxidoreductase subunit K from Bacillus cytotoxicus (strain DSM 22905 / CIP 110041 / 391-98 / NVH 391-98).